Here is a 340-residue protein sequence, read N- to C-terminus: HTH-type transcriptional regulator PtxS (340 aa).

Residues 12 to 67 (VTISEVAQAAGVSKATVSRYIGGDRQLLADATAQRIEAVIEQLGYRPNRMASALKR) enclose the HTH lacI-type domain. Residues 14–33 (ISEVAQAAGVSKATVSRYIG) constitute a DNA-binding region (H-T-H motif).

Homodimer.

With respect to regulation, 2-ketogluconate acts as a molecular effector and causes dissociation of PtxS from its target promoter. Glucose negatively affects the molecular binding of PtxS and 2KGA, and gluconic acid inhibits the PtxS-2KGA binding reaction. Involved in the regulation of 2-ketogluconic acid metabolism via the control of the expression of the kgu operon. Binds directly to a 14-bp palindrome sequence via its conserved HTH motif. This is HTH-type transcriptional regulator PtxS from Pseudomonas plecoglossicida.